The primary structure comprises 368 residues: Phospho-N-acetylmuramoyl-pentapeptide-transferase (368 aa).

The next 9 helical transmembrane spans lie at A30–L50, L72–S92, I95–I115, V139–L159, Y169–V189, A208–V228, G238–F258, E264–I286, and K345–L365.

The protein belongs to the glycosyltransferase 4 family. MraY subfamily. Mg(2+) is required as a cofactor.

It localises to the cell inner membrane. It catalyses the reaction UDP-N-acetyl-alpha-D-muramoyl-L-alanyl-gamma-D-glutamyl-meso-2,6-diaminopimeloyl-D-alanyl-D-alanine + di-trans,octa-cis-undecaprenyl phosphate = di-trans,octa-cis-undecaprenyl diphospho-N-acetyl-alpha-D-muramoyl-L-alanyl-D-glutamyl-meso-2,6-diaminopimeloyl-D-alanyl-D-alanine + UMP. It functions in the pathway cell wall biogenesis; peptidoglycan biosynthesis. Functionally, catalyzes the initial step of the lipid cycle reactions in the biosynthesis of the cell wall peptidoglycan: transfers peptidoglycan precursor phospho-MurNAc-pentapeptide from UDP-MurNAc-pentapeptide onto the lipid carrier undecaprenyl phosphate, yielding undecaprenyl-pyrophosphoryl-MurNAc-pentapeptide, known as lipid I. This is Phospho-N-acetylmuramoyl-pentapeptide-transferase from Pelodictyon phaeoclathratiforme (strain DSM 5477 / BU-1).